The primary structure comprises 834 residues: Periplasmic nitrate reductase (834 aa).

The segment at residues 1 to 29 is a signal peptide (tat-type signal); that stretch reads MSLTRRQFAKANAAAIAATVAGMPIASTA. The region spanning 41 to 97 is the 4Fe-4S Mo/W bis-MGD-type domain; sequence LKWDKAPCRFCGTGCGVMVATRENRVVATHGDVKADVNRGINCVKGYFLSKIMYGTD. Cysteine 48, cysteine 51, cysteine 55, and cysteine 83 together coordinate [4Fe-4S] cluster. Mo-bis(molybdopterin guanine dinucleotide)-binding positions include lysine 85, glutamine 152, asparagine 177, cysteine 181, 214–221, 245–249, 264–266, methionine 375, glutamine 379, asparagine 485, 511–512, lysine 534, aspartate 561, and 721–730; these read WGSNMAEM, STFEH, QTD, SD, and TGRVLEHWHT. Phenylalanine 797 provides a ligand contact to substrate. Mo-bis(molybdopterin guanine dinucleotide) is bound by residues asparagine 805 and lysine 822.

This sequence belongs to the prokaryotic molybdopterin-containing oxidoreductase family. NasA/NapA/NarB subfamily. Component of the periplasmic nitrate reductase NapAB complex composed of NapA and NapB. The cofactor is [4Fe-4S] cluster. Mo-bis(molybdopterin guanine dinucleotide) serves as cofactor. Post-translationally, predicted to be exported by the Tat system. The position of the signal peptide cleavage has not been experimentally proven.

The protein localises to the periplasm. The enzyme catalyses 2 Fe(II)-[cytochrome] + nitrate + 2 H(+) = 2 Fe(III)-[cytochrome] + nitrite + H2O. Functionally, catalytic subunit of the periplasmic nitrate reductase complex NapAB. Receives electrons from NapB and catalyzes the reduction of nitrate to nitrite. In Stutzerimonas stutzeri (Pseudomonas stutzeri), this protein is Periplasmic nitrate reductase.